The primary structure comprises 184 residues: Probable maltose O-acetyltransferase (184 aa).

Asn84 is a binding site for acetyl-CoA. His114 functions as the Proton donor/acceptor in the catalytic mechanism. Acetyl-CoA-binding positions include Gly141, Ser159, 164-165, Arg179, and Lys182; that span reads TK.

Belongs to the transferase hexapeptide repeat family. Homodimer.

The catalysed reaction is D-maltose + acetyl-CoA = 1-O-acetylmaltose + CoA. Its function is as follows. Catalyzes the CoA-dependent transfer of an acetyl group to maltose and other sugars. Acetylates glucose exclusively at the C6 position and maltose at the C6 position of the non-reducing end glucosyl moiety. Is able to acetylate maltooligosaccharides. In Bacillus subtilis (strain 168), this protein is Probable maltose O-acetyltransferase (maa).